The primary structure comprises 256 residues: uncharacterized protein (256 aa).

A signal peptide spans 1–22 (MNNFRQCALCIGTSVLILLVSG). Cysteine 23 carries the N-palmitoyl cysteine lipid modification. Cysteine 23 is lipidated: S-diacylglycerol cysteine.

It belongs to the staphylococcal tandem lipoprotein family.

Its subcellular location is the cell membrane. This is an uncharacterized protein from Staphylococcus aureus (strain bovine RF122 / ET3-1).